The chain runs to 199 residues: Thymidine kinase (199 aa).

ATP is bound by residues 23 to 30 (GSMFSGKT) and 95 to 98 (DEAQ). Glutamate 96 serves as the catalytic Proton acceptor. Zn(2+) contacts are provided by cysteine 152, cysteine 155, cysteine 184, and cysteine 187.

The protein belongs to the thymidine kinase family. Homotetramer.

The protein resides in the cytoplasm. It catalyses the reaction thymidine + ATP = dTMP + ADP + H(+). The protein is Thymidine kinase of Bacteroides thetaiotaomicron (strain ATCC 29148 / DSM 2079 / JCM 5827 / CCUG 10774 / NCTC 10582 / VPI-5482 / E50).